Here is a 343-residue protein sequence, read N- to C-terminus: Cytoplasmic tRNA 2-thiolation protein 1 (343 aa).

This sequence belongs to the TtcA family. CTU1/NCS6/ATPBD3 subfamily.

It localises to the cytoplasm. Its pathway is tRNA modification; 5-methoxycarbonylmethyl-2-thiouridine-tRNA biosynthesis. Plays a central role in 2-thiolation of mcm(5)S(2)U at tRNA wobble positions of tRNA(Lys), tRNA(Glu) and tRNA(Gln). Directly binds tRNAs and probably acts by catalyzing adenylation of tRNAs, an intermediate required for 2-thiolation. It is unclear whether it acts as a sulfurtransferase that transfers sulfur from thiocarboxylated URM1 onto the uridine of tRNAs at wobble position. The polypeptide is Cytoplasmic tRNA 2-thiolation protein 1 (Drosophila ananassae (Fruit fly)).